Consider the following 808-residue polypeptide: Zinc finger protein 841 (808 aa).

Lysine 137 is covalently cross-linked (Glycyl lysine isopeptide (Lys-Gly) (interchain with G-Cter in SUMO2)). The segment at 145-167 (YIGNECGKAFRVSSSLINHQMIH) adopts a C2H2-type 1; degenerate zinc-finger fold. Residues 173–195 (YRCNESGKAFHRGSLLTVHQIVH) form a C2H2-type 2; degenerate zinc finger. C2H2-type zinc fingers lie at residues 201-223 (YQCD…RRSH), 229-251 (YICN…QRIH), 257-279 (YKCN…QTVH), 285-307 (YKCN…HIIH), 313-335 (YTCD…QIIH), 341-363 (YKCN…RRIH), 369-391 (YKCN…QRVH), 397-419 (YKCN…QRIH), 425-447 (YKCN…MRCH), 453-475 (LHCN…QRMH), 481-503 (YKCN…RRSH), 509-531 (FQCN…RKIH), and 537-559 (YKCN…LVIH). Glycyl lysine isopeptide (Lys-Gly) (interchain with G-Cter in SUMO2) cross-links involve residues lysine 554 and lysine 579. The C2H2-type 16; degenerate zinc-finger motif lies at 565-587 (YHCNEFGEAFIQSSKLARYHRNP). 7 C2H2-type zinc fingers span residues 593–615 (HKCS…QRRH), 621–643 (YKCI…RRIH), 649–671 (YKCN…WSIH), 677–699 (YKCN…QMMH), 705–727 (YKCN…QRNH), 733–755 (YKCM…QRIH), and 761–783 (YKCN…QIKH). Lysine 791 participates in a covalent cross-link: Glycyl lysine isopeptide (Lys-Gly) (interchain with G-Cter in SUMO2).

This sequence belongs to the krueppel C2H2-type zinc-finger protein family.

It localises to the nucleus. Functionally, may be involved in transcriptional regulation. This is Zinc finger protein 841 (ZNF841) from Homo sapiens (Human).